The chain runs to 448 residues: Probable cytosolic Fe-S cluster assembly factor Bm6838 (448 aa).

[4Fe-4S] cluster contacts are provided by C27, C66, C69, C72, C170, C226, C370, and C374.

The protein belongs to the NARF family.

Component of the cytosolic iron-sulfur (Fe/S) protein assembly machinery. Required for maturation of extramitochondrial Fe/S proteins. This Brugia malayi (Filarial nematode worm) protein is Probable cytosolic Fe-S cluster assembly factor Bm6838.